The primary structure comprises 205 residues: ATP phosphoribosyltransferase (205 aa).

The protein belongs to the ATP phosphoribosyltransferase family. Short subfamily. As to quaternary structure, heteromultimer composed of HisG and HisZ subunits.

Its subcellular location is the cytoplasm. The catalysed reaction is 1-(5-phospho-beta-D-ribosyl)-ATP + diphosphate = 5-phospho-alpha-D-ribose 1-diphosphate + ATP. Its pathway is amino-acid biosynthesis; L-histidine biosynthesis; L-histidine from 5-phospho-alpha-D-ribose 1-diphosphate: step 1/9. In terms of biological role, catalyzes the condensation of ATP and 5-phosphoribose 1-diphosphate to form N'-(5'-phosphoribosyl)-ATP (PR-ATP). Has a crucial role in the pathway because the rate of histidine biosynthesis seems to be controlled primarily by regulation of HisG enzymatic activity. The protein is ATP phosphoribosyltransferase of Leptospira interrogans serogroup Icterohaemorrhagiae serovar Lai (strain 56601).